Here is a 183-residue protein sequence, read N- to C-terminus: Translation initiation factor IF-3 (183 aa).

The segment covering 1 to 13 (MKQPDRNQQQGAK) has biased composition (polar residues). A disordered region spans residues 1–21 (MKQPDRNQQQGAKSNRPAIND).

Belongs to the IF-3 family. As to quaternary structure, monomer.

It is found in the cytoplasm. Functionally, IF-3 binds to the 30S ribosomal subunit and shifts the equilibrium between 70S ribosomes and their 50S and 30S subunits in favor of the free subunits, thus enhancing the availability of 30S subunits on which protein synthesis initiation begins. The chain is Translation initiation factor IF-3 from Acinetobacter baumannii (strain AYE).